A 367-amino-acid chain; its full sequence is Glutamate 5-kinase (367 aa).

Residue Lys10 coordinates ATP. Substrate contacts are provided by Asp137 and Asn149. Residues 169 to 170 (TD) and 211 to 217 (TGGMATK) contribute to the ATP site. In terms of domain architecture, PUA spans 275 to 353 (AGEITVDDGA…QQISEILGYE (79 aa)).

The protein belongs to the glutamate 5-kinase family.

It localises to the cytoplasm. The catalysed reaction is L-glutamate + ATP = L-glutamyl 5-phosphate + ADP. The protein operates within amino-acid biosynthesis; L-proline biosynthesis; L-glutamate 5-semialdehyde from L-glutamate: step 1/2. In terms of biological role, catalyzes the transfer of a phosphate group to glutamate to form L-glutamate 5-phosphate. This is Glutamate 5-kinase from Yersinia pestis bv. Antiqua (strain Antiqua).